Here is a 460-residue protein sequence, read N- to C-terminus: UDP-N-acetylmuramoylalanine--D-glutamate ligase (460 aa).

120-126 (GSNGKTT) contacts ATP.

It belongs to the MurCDEF family.

The protein localises to the cytoplasm. The enzyme catalyses UDP-N-acetyl-alpha-D-muramoyl-L-alanine + D-glutamate + ATP = UDP-N-acetyl-alpha-D-muramoyl-L-alanyl-D-glutamate + ADP + phosphate + H(+). Its pathway is cell wall biogenesis; peptidoglycan biosynthesis. Cell wall formation. Catalyzes the addition of glutamate to the nucleotide precursor UDP-N-acetylmuramoyl-L-alanine (UMA). The polypeptide is UDP-N-acetylmuramoylalanine--D-glutamate ligase (Lactobacillus delbrueckii subsp. bulgaricus (strain ATCC 11842 / DSM 20081 / BCRC 10696 / JCM 1002 / NBRC 13953 / NCIMB 11778 / NCTC 12712 / WDCM 00102 / Lb 14)).